A 431-amino-acid polypeptide reads, in one-letter code: Cyclic GMP-AMP synthase-like receptor (431 aa).

ATP-binding positions include Ser73 and 85-87 (EFD). Mg(2+)-binding residues include Glu85, Asp87, and Asp212. Residue Asp212 participates in GTP binding. Residues Lys290 and 304–308 (SYALK) contribute to the ATP site. Glu316 lines the Mn(2+) pocket.

It belongs to the mab-21 family. It depends on Mg(2+) as a cofactor. The cofactor is Mn(2+).

The enzyme catalyses GTP + ATP = 2',3'-cGAMP + 2 diphosphate. It carries out the reaction GTP + ATP = pppGp(2'-5')A + diphosphate. The catalysed reaction is pppGp(2'-5')A = 2',3'-cGAMP + diphosphate. In terms of biological role, nucleotidyltransferase that catalyzes the formation of cyclic GMP-AMP (2',3'-cGAMP) from ATP and GTP and plays a key role in innate immunity. Acts as a key sensor of double-stranded RNA (dsRNA), the presence of dsRNA in the cytoplasm being a danger signal that triggers the immune responses. Directly binds dsRNA, activating the nucleotidyltransferase activity, leading to synthesis of 2',3'-cGAMP, a second messenger that binds to and activates Sting, thereby triggering the immune response via activation of the NF-kappa-B transcription factor. The polypeptide is Cyclic GMP-AMP synthase-like receptor (Frankliniella occidentalis (Western flower thrips)).